Reading from the N-terminus, the 388-residue chain is Succinate--CoA ligase [ADP-forming] subunit beta (388 aa).

One can recognise an ATP-grasp domain in the interval 9–244; that stretch reads KSLFAEYGLP…PSQDDAREAH (236 aa). ATP contacts are provided by residues Lys-46, 53–55, Glu-99, Thr-102, and Glu-107; that span reads GRG. Positions 199 and 213 each coordinate Mg(2+). Substrate is bound by residues Asn-264 and 321-323; that span reads GIV.

Belongs to the succinate/malate CoA ligase beta subunit family. Heterotetramer of two alpha and two beta subunits. The cofactor is Mg(2+).

It carries out the reaction succinate + ATP + CoA = succinyl-CoA + ADP + phosphate. It catalyses the reaction GTP + succinate + CoA = succinyl-CoA + GDP + phosphate. It participates in carbohydrate metabolism; tricarboxylic acid cycle; succinate from succinyl-CoA (ligase route): step 1/1. Its function is as follows. Succinyl-CoA synthetase functions in the citric acid cycle (TCA), coupling the hydrolysis of succinyl-CoA to the synthesis of either ATP or GTP and thus represents the only step of substrate-level phosphorylation in the TCA. The beta subunit provides nucleotide specificity of the enzyme and binds the substrate succinate, while the binding sites for coenzyme A and phosphate are found in the alpha subunit. This chain is Succinate--CoA ligase [ADP-forming] subunit beta, found in Shewanella denitrificans (strain OS217 / ATCC BAA-1090 / DSM 15013).